The following is a 398-amino-acid chain: tRNA(Ile)-lysidine synthase (398 aa).

25 to 30 serves as a coordination point for ATP; the sequence is SGGVDS.

It belongs to the tRNA(Ile)-lysidine synthase family.

The protein localises to the cytoplasm. It carries out the reaction cytidine(34) in tRNA(Ile2) + L-lysine + ATP = lysidine(34) in tRNA(Ile2) + AMP + diphosphate + H(+). Its function is as follows. Ligates lysine onto the cytidine present at position 34 of the AUA codon-specific tRNA(Ile) that contains the anticodon CAU, in an ATP-dependent manner. Cytidine is converted to lysidine, thus changing the amino acid specificity of the tRNA from methionine to isoleucine. The chain is tRNA(Ile)-lysidine synthase from Francisella tularensis subsp. novicida (strain U112).